The chain runs to 687 residues: Glycine--tRNA ligase beta subunit (687 aa).

Belongs to the class-II aminoacyl-tRNA synthetase family. In terms of assembly, tetramer of two alpha and two beta subunits.

The protein resides in the cytoplasm. It carries out the reaction tRNA(Gly) + glycine + ATP = glycyl-tRNA(Gly) + AMP + diphosphate. This is Glycine--tRNA ligase beta subunit from Neisseria meningitidis serogroup C (strain 053442).